The sequence spans 130 residues: uncharacterized protein (130 aa).

A signal peptide spans 1–19; it reads MLAPLFLCCLRNLFRKLIS.

The protein localises to the secreted. This is an uncharacterized protein from Homo sapiens (Human).